We begin with the raw amino-acid sequence, 295 residues long: Histamine N-methyltransferase (295 aa).

E28 is a binding site for substrate. S-adenosyl-L-methionine-binding residues include G60, E89, Q94, S120, and I143. Substrate is bound at residue N284.

It belongs to the class I-like SAM-binding methyltransferase superfamily. HNMT family. Monomer.

Its subcellular location is the cytoplasm. It carries out the reaction histamine + S-adenosyl-L-methionine = N(tau)-methylhistamine + S-adenosyl-L-homocysteine + H(+). Inactivates histamine by N-methylation. Plays an important role in degrading histamine and in regulating the airway response to histamine. The chain is Histamine N-methyltransferase (Hnmt) from Mus musculus (Mouse).